Here is a 249-residue protein sequence, read N- to C-terminus: Indole-3-glycerol phosphate synthase (249 aa).

It belongs to the TrpC family.

It catalyses the reaction 1-(2-carboxyphenylamino)-1-deoxy-D-ribulose 5-phosphate + H(+) = (1S,2R)-1-C-(indol-3-yl)glycerol 3-phosphate + CO2 + H2O. The protein operates within amino-acid biosynthesis; L-tryptophan biosynthesis; L-tryptophan from chorismate: step 4/5. The polypeptide is Indole-3-glycerol phosphate synthase (Pyrobaculum neutrophilum (strain DSM 2338 / JCM 9278 / NBRC 100436 / V24Sta) (Thermoproteus neutrophilus)).